The chain runs to 192 residues: Protein GrpE (192 aa).

Residues 1-34 (MSSKEQKTPNEQVSEEMENTAEQQVEATQETGEC) are disordered. Over residues 20 to 31 (TAEQQVEATQET) the composition is skewed to polar residues.

It belongs to the GrpE family. In terms of assembly, homodimer.

It localises to the cytoplasm. Its function is as follows. Participates actively in the response to hyperosmotic and heat shock by preventing the aggregation of stress-denatured proteins, in association with DnaK and GrpE. It is the nucleotide exchange factor for DnaK and may function as a thermosensor. Unfolded proteins bind initially to DnaJ; upon interaction with the DnaJ-bound protein, DnaK hydrolyzes its bound ATP, resulting in the formation of a stable complex. GrpE releases ADP from DnaK; ATP binding to DnaK triggers the release of the substrate protein, thus completing the reaction cycle. Several rounds of ATP-dependent interactions between DnaJ, DnaK and GrpE are required for fully efficient folding. The polypeptide is Protein GrpE (Yersinia pestis).